The primary structure comprises 437 residues: Phosphomethylpyrimidine synthase (437 aa).

Substrate is bound by residues N69, M98, Y127, H163, 185-187 (SRG), 226-229 (DACR), and E265. H269 lines the Zn(2+) pocket. Y292 contributes to the substrate binding site. Position 333 (H333) interacts with Zn(2+). The [4Fe-4S] cluster site is built by C409, C412, and C416.

Belongs to the ThiC family. Requires [4Fe-4S] cluster as cofactor.

The catalysed reaction is 5-amino-1-(5-phospho-beta-D-ribosyl)imidazole + S-adenosyl-L-methionine = 4-amino-2-methyl-5-(phosphooxymethyl)pyrimidine + CO + 5'-deoxyadenosine + formate + L-methionine + 3 H(+). It functions in the pathway cofactor biosynthesis; thiamine diphosphate biosynthesis. In terms of biological role, catalyzes the synthesis of the hydroxymethylpyrimidine phosphate (HMP-P) moiety of thiamine from aminoimidazole ribotide (AIR) in a radical S-adenosyl-L-methionine (SAM)-dependent reaction. This chain is Phosphomethylpyrimidine synthase, found in Clostridium botulinum (strain Kyoto / Type A2).